A 201-amino-acid chain; its full sequence is Recombination protein RecR (201 aa).

The segment at 60-75 (CSVCGNVDTTDPCSIC) adopts a C4-type zinc-finger fold. The Toprim domain maps to 83 to 178 (TTIIVVEDVA…KITRLAHGVP (96 aa)).

This sequence belongs to the RecR family.

Its function is as follows. May play a role in DNA repair. It seems to be involved in an RecBC-independent recombinational process of DNA repair. It may act with RecF and RecO. This is Recombination protein RecR from Bartonella quintana (strain Toulouse) (Rochalimaea quintana).